We begin with the raw amino-acid sequence, 243 residues long: Small ribosomal subunit protein uS2c (243 aa).

Residues 224–243 are disordered; it reads GNNGKVSSDQEDTQELQTVQ.

It belongs to the universal ribosomal protein uS2 family.

The protein resides in the plastid. It is found in the chloroplast. This chain is Small ribosomal subunit protein uS2c (rps2), found in Rhodomonas salina (Cryptomonas salina).